A 324-amino-acid polypeptide reads, in one-letter code: MIFSTLEHILTHISFSIVCIVITIHLITLLIDEIIKLNNSSEKGMIATFLCITVLLVTRCIYSGHLPLSDLYESLIFLSWSLSFIHIVPYFKKNKSHLSTITASSVIFTQGFATSGLLTEIHQSAILVPALQSEWLIMHVSMMILGYAALLCGSLLSVALLVLTFRKNRNLLCKKNPLLLKLTEEFSFGEIQYINEINNIFGNASFFSDNNYYRSQLIQQLDYWSYRVISLGFIFLTIGILSGAVWANEAWGSYWNWDPKETWAFITWIVFAVYLHTRTNTNLQVENSAIVASMGFLIIWICYFGVNLLGIGLHTYGSFTLTSN.

8 consecutive transmembrane segments (helical) span residues 15–35 (FSIV…DEII), 44–64 (GMIA…IYSG), 71–91 (LYES…VPYF), 98–118 (LSTI…SGLL), 143–163 (MILG…LLVL), 228–248 (VISL…VWAN), 255–275 (WNWD…AVYL), and 289–309 (AIVA…VNLL).

It belongs to the CcmF/CycK/Ccl1/NrfE/CcsA family. May interact with Ccs1.

The protein resides in the plastid. The protein localises to the chloroplast thylakoid membrane. Functionally, required during biogenesis of c-type cytochromes (cytochrome c6 and cytochrome f) at the step of heme attachment. The chain is Cytochrome c biogenesis protein CcsA from Daucus carota (Wild carrot).